The following is a 305-amino-acid chain: MSKAVSEILGYMYIFGIVMAVLAIVFVQVNTMTEDMKRSVMSQSLEQSFKKIQYIIHSVSFGEVPSQAVEIELQGGTLTLDKSDPEFIVAFVNYTETNPSNLPCGRVPNSVPLCINLSTGRLYTACTHTGYNFSACTLNHTIGKIVYRYKDWFLTLEAGSVFSKYSNQDYSKLLYEPRILYNATLSTPGKRFLVMTIPLLDGELSIGGSGRFRFVLNEGNSNVSLISVSNLGQDFNDAYVILRGTENKDAWCRFFERSGDVFNTTLDDTKTSYRRCSNSENAMASIKLSNVHEIIVIFRQVLFST.

The signal sequence occupies residues 1-29; the sequence is MSKAVSEILGYMYIFGIVMAVLAIVFVQV.

This is an uncharacterized protein from Archaeoglobus fulgidus (strain ATCC 49558 / DSM 4304 / JCM 9628 / NBRC 100126 / VC-16).